An 88-amino-acid chain; its full sequence is Protein MATERNALLY EXPRESSED GENE 2 (88 aa).

The N-terminal stretch at 1–27 (MEYRKRVDALVFFSLLLLGYFAAHAHG) is a signal peptide. Cysteine 65 and cysteine 87 form a disulfide bridge.

It belongs to the MEG family. As to expression, expressed exclusively in endosperm.

The polypeptide is Protein MATERNALLY EXPRESSED GENE 2 (MEG2) (Zea mays (Maize)).